Consider the following 821-residue polypeptide: LPS-assembly protein LptD (821 aa).

The first 20 residues, 1 to 20 (MGKRLFWTALSGLMVSAAHA), serve as a signal peptide directing secretion.

The protein belongs to the LptD family. In terms of assembly, component of the lipopolysaccharide transport and assembly complex. Interacts with LptE and LptA.

The protein localises to the cell outer membrane. In terms of biological role, together with LptE, is involved in the assembly of lipopolysaccharide (LPS) at the surface of the outer membrane. This is LPS-assembly protein LptD from Chromohalobacter salexigens (strain ATCC BAA-138 / DSM 3043 / CIP 106854 / NCIMB 13768 / 1H11).